A 93-amino-acid polypeptide reads, in one-letter code: Cell division protein CrgA (93 aa).

A run of 2 helical transmembrane segments spans residues 31–51 and 70–90; these read VWFVSLFIGLMLIGLIWLMVF and LGPWNYAIAFAFMITGLLLTM.

The protein belongs to the CrgA family.

The protein resides in the cell membrane. Functionally, involved in cell division. This is Cell division protein CrgA from Mycobacterium bovis (strain ATCC BAA-935 / AF2122/97).